The chain runs to 160 residues: MMERFEKIEMKIPAKAEYVAIIRLTMAGVANRMGFAYDDIEDMKIAISEACTNIVQHAYKEDVGEIAIVFGLYEDRLEIMVADNGVSFDFNNLKRKVGPYDISKPVEHLPENGLGLYLINTLMDDIQIMHDEGMTVLMTKYIQREQVENDGNPISTYESY.

Belongs to the anti-sigma-factor family.

It carries out the reaction L-seryl-[protein] + ATP = O-phospho-L-seryl-[protein] + ADP + H(+). The enzyme catalyses L-threonyl-[protein] + ATP = O-phospho-L-threonyl-[protein] + ADP + H(+). Functionally, negative regulator of sigma-B activity. Phosphorylates and inactivates its specific antagonist protein, RsbV. Upon phosphorylation of RsbV, RsbW is released and binds to sigma-B, thereby blocking its ability to form an RNA polymerase holoenzyme (E-sigma-B). The sequence is that of Serine-protein kinase RsbW from Bacillus cereus (strain ZK / E33L).